A 141-amino-acid polypeptide reads, in one-letter code: Large ribosomal subunit protein uL16 (141 aa).

The tract at residues 1-20 is disordered; it reads MLMPKRTKYRKQQKGRNRGK.

It belongs to the universal ribosomal protein uL16 family. As to quaternary structure, part of the 50S ribosomal subunit.

In terms of biological role, binds 23S rRNA and is also seen to make contacts with the A and possibly P site tRNAs. This Nautilia profundicola (strain ATCC BAA-1463 / DSM 18972 / AmH) protein is Large ribosomal subunit protein uL16.